A 240-amino-acid polypeptide reads, in one-letter code: Acyl-protein thioesterase 1 (240 aa).

Active-site charge relay system residues include Ser-129, Asp-183, and His-219.

It belongs to the AB hydrolase superfamily. AB hydrolase 2 family.

The protein resides in the cytoplasm. It is found in the nucleus. It catalyses the reaction S-hexadecanoyl-L-cysteinyl-[protein] + H2O = L-cysteinyl-[protein] + hexadecanoate + H(+). Functionally, hydrolyzes fatty acids from S-acylated cysteine residues in proteins with a strong preference for palmitoylated G-alpha proteins over other acyl substrates. Mediates the deacylation of G-alpha proteins such as GPA1 in vivo, but has weak or no activity toward palmitoylated Ras proteins. Has weak lysophospholipase activity in vitro; however such activity may not exist in vivo. This Mycosarcoma maydis (Corn smut fungus) protein is Acyl-protein thioesterase 1.